Reading from the N-terminus, the 1154-residue chain is PAN2-PAN3 deadenylation complex catalytic subunit pan2 (1154 aa).

WD repeat units follow at residues 20–59, 102–145, and 276–315; these read GLPTVATTIAFDDVSELLWAGNEYGRITSFYGPELQRYTS, THDE…DKLR, and ATVSFMLGIEISPSGEALAINDAECFIQLWGSPAKIHFNE. The interval 316 to 451 is linker; that stretch reads MSKEVEFADV…GARISGESED (136 aa). One can recognise a USP domain in the interval 452–821; sequence DPLLKYSNVE…SPCVLAFQVR (370 aa). An Exonuclease domain is found at 870–1048; sequence VALDTEFVDL…IEDARMALRL (179 aa). A divalent metal cation contacts are provided by aspartate 873, glutamate 875, aspartate 982, and aspartate 1041. The segment at 1092–1154 is disordered; that stretch reads PGTAVTMQNN…GEFFTGSPLK (63 aa). Composition is skewed to polar residues over residues 1096-1109 and 1132-1141; these read VTMQNNSGRNTPST and LTPSNGTFSG.

This sequence belongs to the peptidase C19 family. PAN2 subfamily. As to quaternary structure, forms a heterotrimer with an asymmetric homodimer of the regulatory subunit pan3 to form the poly(A)-nuclease (PAN) deadenylation complex. A divalent metal cation serves as cofactor.

It localises to the cytoplasm. The catalysed reaction is Exonucleolytic cleavage of poly(A) to 5'-AMP.. With respect to regulation, positively regulated by the regulatory subunit pan3. Catalytic subunit of the poly(A)-nuclease (PAN) deadenylation complex, one of two cytoplasmic mRNA deadenylases involved in mRNA turnover. PAN specifically shortens poly(A) tails of RNA and the activity is stimulated by poly(A)-binding protein pab1. PAN deadenylation is followed by rapid degradation of the shortened mRNA tails by the CCR4-NOT complex. Deadenylated mRNAs are then degraded by two alternative mechanisms, namely exosome-mediated 3'-5' exonucleolytic degradation, or deadenylation-dependent mRNA decaping and subsequent 5'-3' exonucleolytic degradation by xrn1. May also be involved in post-transcriptional maturation of mRNA poly(A) tails. The sequence is that of PAN2-PAN3 deadenylation complex catalytic subunit pan2 from Emericella nidulans (strain FGSC A4 / ATCC 38163 / CBS 112.46 / NRRL 194 / M139) (Aspergillus nidulans).